Reading from the N-terminus, the 197-residue chain is Holliday junction branch migration complex subunit RuvA (197 aa).

The segment at 1–64 is domain I; it reads MYEYIKGKYI…EDFIGIYGFL (64 aa). Residues 65–143 form a domain II region; sequence TKDELSMFKL…IDISEEDDEQ (79 aa). The flexible linker stretch occupies residues 144 to 148; sequence IINKV. A domain III region spans residues 149-197; the sequence is TDDKKVLEAVAALVTLGYSEKEASKVINLCDKNNSLEQIIKEALKHLMK.

This sequence belongs to the RuvA family. In terms of assembly, homotetramer. Forms an RuvA(8)-RuvB(12)-Holliday junction (HJ) complex. HJ DNA is sandwiched between 2 RuvA tetramers; dsDNA enters through RuvA and exits via RuvB. An RuvB hexamer assembles on each DNA strand where it exits the tetramer. Each RuvB hexamer is contacted by two RuvA subunits (via domain III) on 2 adjacent RuvB subunits; this complex drives branch migration. In the full resolvosome a probable DNA-RuvA(4)-RuvB(12)-RuvC(2) complex forms which resolves the HJ.

It is found in the cytoplasm. Its function is as follows. The RuvA-RuvB-RuvC complex processes Holliday junction (HJ) DNA during genetic recombination and DNA repair, while the RuvA-RuvB complex plays an important role in the rescue of blocked DNA replication forks via replication fork reversal (RFR). RuvA specifically binds to HJ cruciform DNA, conferring on it an open structure. The RuvB hexamer acts as an ATP-dependent pump, pulling dsDNA into and through the RuvAB complex. HJ branch migration allows RuvC to scan DNA until it finds its consensus sequence, where it cleaves and resolves the cruciform DNA. The sequence is that of Holliday junction branch migration complex subunit RuvA from Clostridium botulinum (strain Loch Maree / Type A3).